Here is an 80-residue protein sequence, read N- to C-terminus: Protein FAM229B (80 aa).

The interval 1 to 44 is disordered; sequence MPFRFGTQPRRFPVEGGDSSIGLEPGLSSSATCNGKEMSPTRQL.

It belongs to the FAM229 family.

In Bos taurus (Bovine), this protein is Protein FAM229B (FAM229B).